Here is a 210-residue protein sequence, read N- to C-terminus: Ras-related protein RABC2a (210 aa).

Glycine 20–serine 27 serves as a coordination point for GTP. Positions leucine 41 to phenylalanine 49 match the Effector region motif. GTP is bound by residues aspartate 67–glutamine 71, asparagine 127–aspartate 130, and serine 157–alanine 158. Residues cysteine 208 and cysteine 209 are each lipidated (S-geranylgeranyl cysteine).

It belongs to the small GTPase superfamily. Rab family. Interacts with XI-2/MYA2.

The protein resides in the cell membrane. The protein localises to the cytoplasm. Intracellular vesicle trafficking and protein transport. This is Ras-related protein RABC2a (RABC2A) from Arabidopsis thaliana (Mouse-ear cress).